Consider the following 383-residue polypeptide: Putative [LysW]-aminoadipate semialdehyde/glutamate semialdehyde transaminase (383 aa).

Pyridoxal 5'-phosphate-binding positions include 97 to 98 and F124; that span reads GT. R127 contacts substrate. Pyridoxal 5'-phosphate is bound at residue 209 to 212; that stretch reads DEVQ. K238 bears the N6-(pyridoxal phosphate)lysine mark. S266 is a substrate binding site. T267 is a binding site for pyridoxal 5'-phosphate.

It belongs to the class-III pyridoxal-phosphate-dependent aminotransferase family. LysJ subfamily. In terms of assembly, homodimer. Pyridoxal 5'-phosphate serves as cofactor.

Its subcellular location is the cytoplasm. The enzyme catalyses [amino-group carrier protein]-C-terminal-gamma-(L-lysyl)-L-glutamate + 2-oxoglutarate = [amino-group carrier protein]-C-terminal-N-(1-carboxy-5-oxopentan-1-yl)-L-glutamine + L-glutamate. It carries out the reaction [amino-group carrier protein]-C-terminal-gamma-(L-ornithyl)-L-glutamate + 2-oxoglutarate = [amino-group carrier protein]-C-terminal-gamma-(L-glutamyl-5-semialdehyde)-L-glutamate + L-glutamate. Its pathway is amino-acid biosynthesis; L-lysine biosynthesis via AAA pathway; L-lysine from L-alpha-aminoadipate (Thermus route): step 4/5. The protein operates within amino-acid biosynthesis; L-arginine biosynthesis. Functionally, involved in both the arginine and lysine biosynthetic pathways. This is Putative [LysW]-aminoadipate semialdehyde/glutamate semialdehyde transaminase from Pyrobaculum aerophilum (strain ATCC 51768 / DSM 7523 / JCM 9630 / CIP 104966 / NBRC 100827 / IM2).